Consider the following 575-residue polypeptide: Arginine--tRNA ligase (575 aa).

The 'HIGH' region signature appears at 122–132 (PNVAKEMHVGH).

This sequence belongs to the class-I aminoacyl-tRNA synthetase family. As to quaternary structure, monomer.

The protein localises to the cytoplasm. The enzyme catalyses tRNA(Arg) + L-arginine + ATP = L-arginyl-tRNA(Arg) + AMP + diphosphate. This is Arginine--tRNA ligase from Actinobacillus succinogenes (strain ATCC 55618 / DSM 22257 / CCUG 43843 / 130Z).